Reading from the N-terminus, the 661-residue chain is UvrABC system protein B (661 aa).

Residues 28–414 (DGVNERKRHQ…HTDEMVEQII (387 aa)) enclose the Helicase ATP-binding domain. 41–48 (GATGTGKT) provides a ligand contact to ATP. The Beta-hairpin motif lies at 94–117 (YYDYYQPEAYVPSTDTFIEKDASI). Positions 432–598 (QIDDLLSEIQ…TINKKIHDVI (167 aa)) constitute a Helicase C-terminal domain. Residues 603 to 624 (ESDETNQQQQTELPKKMTKKER) form a disordered region. One can recognise a UVR domain in the interval 625 to 660 (QKTIENIEKEMKKAAKDLDFEKATELRDMLFELKAE).

This sequence belongs to the UvrB family. As to quaternary structure, forms a heterotetramer with UvrA during the search for lesions. Interacts with UvrC in an incision complex.

Its subcellular location is the cytoplasm. In terms of biological role, the UvrABC repair system catalyzes the recognition and processing of DNA lesions. A damage recognition complex composed of 2 UvrA and 2 UvrB subunits scans DNA for abnormalities. Upon binding of the UvrA(2)B(2) complex to a putative damaged site, the DNA wraps around one UvrB monomer. DNA wrap is dependent on ATP binding by UvrB and probably causes local melting of the DNA helix, facilitating insertion of UvrB beta-hairpin between the DNA strands. Then UvrB probes one DNA strand for the presence of a lesion. If a lesion is found the UvrA subunits dissociate and the UvrB-DNA preincision complex is formed. This complex is subsequently bound by UvrC and the second UvrB is released. If no lesion is found, the DNA wraps around the other UvrB subunit that will check the other stand for damage. This chain is UvrABC system protein B, found in Staphylococcus epidermidis (strain ATCC 12228 / FDA PCI 1200).